The primary structure comprises 129 residues: Large ribosomal subunit protein bL20 (129 aa).

This sequence belongs to the bacterial ribosomal protein bL20 family.

Functionally, binds directly to 23S ribosomal RNA and is necessary for the in vitro assembly process of the 50S ribosomal subunit. It is not involved in the protein synthesizing functions of that subunit. This is Large ribosomal subunit protein bL20 from Mycobacterium leprae (strain Br4923).